A 434-amino-acid polypeptide reads, in one-letter code: Ribosomal protein uS12 methylthiotransferase RimO (434 aa).

Residues 9 to 125 form the MTTase N-terminal domain; that stretch reads PAIFLLSLGC…VLAAIGAKYR (117 aa). Residues Cys18, Cys54, Cys88, Cys149, Cys153, and Cys156 each coordinate [4Fe-4S] cluster. The Radical SAM core domain maps to 135–364; that stretch reads LTPPHYAFLK…MELQEGISAS (230 aa). Positions 367 to 434 constitute a TRAM domain; that stretch reads RKLEGQTLKV…AYELFGRISG (68 aa).

The protein belongs to the methylthiotransferase family. RimO subfamily. The cofactor is [4Fe-4S] cluster.

It is found in the cytoplasm. The catalysed reaction is L-aspartate(89)-[ribosomal protein uS12]-hydrogen + (sulfur carrier)-SH + AH2 + 2 S-adenosyl-L-methionine = 3-methylsulfanyl-L-aspartate(89)-[ribosomal protein uS12]-hydrogen + (sulfur carrier)-H + 5'-deoxyadenosine + L-methionine + A + S-adenosyl-L-homocysteine + 2 H(+). Catalyzes the methylthiolation of an aspartic acid residue of ribosomal protein uS12. This Chlorobaculum tepidum (strain ATCC 49652 / DSM 12025 / NBRC 103806 / TLS) (Chlorobium tepidum) protein is Ribosomal protein uS12 methylthiotransferase RimO.